The chain runs to 67 residues: MQPVESSAIEAAGYDPAEQILALRFTGGATYLYYEVPPEVFDDLLAAESTGRFVNGIVKPRFRAVAL.

This Tsukamurella paurometabola (strain ATCC 8368 / DSM 20162 / CCUG 35730 / CIP 100753 / JCM 10117 / KCTC 9821 / NBRC 16120 / NCIMB 702349 / NCTC 13040) (Corynebacterium paurometabolum) protein is Protein Tpau_2998.